The following is a 1049-amino-acid chain: Desmoglein-1 (1049 aa).

Positions 1-23 are cleaved as a signal peptide; the sequence is MDWSFFRVVAMLFIFLVVVEVNS. The propeptide occupies 24–49; it reads EFRIQVRDYNTKNGTIKWHSIRRQKR. Residues asparagine 36, asparagine 110, and asparagine 180 are each glycosylated (N-linked (GlcNAc...) asparagine). Cadherin domains are found at residues 50-158, 159-270, 271-385, and 386-497; these read EWIK…PVFS, MATF…PYME, QSSY…GPVF, and RPGS…TEPN. The Extracellular segment spans residues 50–548; that stretch reads EWIKFAAACR…LLSDNVHFGP (499 aa). Residues 485–534 form a disordered region; it reads SFGNDDRTNTEPNTKITTNTGRQESTSSTNYDTSTTSTDSSQVYSSEPGN. Residues 494–508 show a composition bias toward polar residues; it reads TEPNTKITTNTGRQE. Positions 509-530 are enriched in low complexity; sequence STSSTNYDTSTTSTDSSQVYSS. A helical transmembrane segment spans residues 549–569; that stretch reads AGIGLLIMGFLVLGLVPFLMI. Topologically, residues 570–1049 are cytoplasmic; the sequence is CCDCGGAPRS…TKYSTVQYSK (480 aa). Serine 579 is modified (phosphoserine). 5 Desmoglein repeat repeats span residues 813–839, 840–869, 870–899, 900–927, and 928–956; these read TYPS…TVTE, SYTT…ERVV, GPIS…ERVI, APSS…ERVI, and QPTS…ERVV. Residues 1014–1035 are disordered; that stretch reads HMRSSSDHHFNQTIGSASPSTA. Residues 1024 to 1035 are compositionally biased toward polar residues; sequence NQTIGSASPSTA.

In terms of assembly, binds to JUP/plakoglobin. Interacts with PKP2. Interacts with DSC3; there is evidence to suggest that the interaction promotes cell-cell adhesion of keratinocytes. (Microbial infection) Interacts with Staphylococcus aureus protein SdrD; this interaction increases S.aureus adherence to keratinocytes. As to expression, expressed in all suprabasal layers of the epidermis, with the highest expression seen in the granular layer (at protein level).

It localises to the cell membrane. The protein resides in the cell junction. It is found in the desmosome. The protein localises to the cytoplasm. Its subcellular location is the nucleus. Component of intercellular desmosome junctions. Involved in the interaction of plaque proteins and intermediate filaments mediating cell-cell adhesion. This Homo sapiens (Human) protein is Desmoglein-1 (DSG1).